A 182-amino-acid chain; its full sequence is Putative manganese efflux pump MntP (182 aa).

A run of 6 helical transmembrane segments spans residues 6-26 (TVLV…GVGT), 37-57 (LSFH…FVGS), 59-79 (AADL…LFIG), 104-126 (SSLV…SFGI), 131-149 (LFLS…TWGA), and 164-181 (METV…KLLL).

This sequence belongs to the MntP (TC 9.B.29) family.

It is found in the cell inner membrane. Functionally, probably functions as a manganese efflux pump. The chain is Putative manganese efflux pump MntP from Syntrophobacter fumaroxidans (strain DSM 10017 / MPOB).